The sequence spans 367 residues: MWKALSLTLALCLLVGCSAESETEGARCKLPPEWKVGDVEPMKNALGQVTVVAYLQASULFCLEQASKLNDLLLKLENQGYPNIAYMVVNNREERSQRLHHLLQERLLNITLYAQDLSQPDAWQAVNAEKDDILVYDRCGRLTYHLSLPYTILSHPHVEEAIKHTYCDRICGECSLESSAQLEECKKATEEVNKPVEEEPRQDHGHHEHGHHEHQGEAERHRHGHHHPHHHHHHHRGQQQVDVDQQVLSQVDFGQVAVETPMMKRPUAKHSRUKVQYSUQQGADSPVASUCUHURQLFGGEGNGRVAGLUHCDEPLPASUPUQGLKEQDNHIKETUQURPAPPAEUELSQPTUVUPAGDATUGURKK.

An N-terminal signal peptide occupies residues 1–19 (MWKALSLTLALCLLVGCSA). A non-standard amino acid (selenocysteine) is located at residue U59. N109 carries an N-linked (GlcNAc...) asparagine glycan. Residues 191-220 (EVNKPVEEEPRQDHGHHEHGHHEHQGEAER) show a composition bias toward basic and acidic residues. The interval 191 to 241 (EVNKPVEEEPRQDHGHHEHGHHEHQGEAERHRHGHHHPHHHHHHHRGQQQV) is disordered. A compositionally biased stretch (basic residues) spans 221-237 (HRHGHHHPHHHHHHHRG). Residues U267, U273, U279, U290, U292, U294, U310, U320, U322, U336, U338, U346, U353, U355, U362, and U364 are each a non-standard amino acid (selenocysteine). The interval 309-367 (LUHCDEPLPASUPUQGLKEQDNHIKETUQURPAPPAEUELSQPTUVUPAGDATUGURKK) is disordered. Over residues 326 to 336 (KEQDNHIKETU) the composition is skewed to basic and acidic residues.

This sequence belongs to the selenoprotein P family.

Its subcellular location is the secreted. Functionally, might be responsible for some of the extracellular antioxidant defense properties of selenium or might be involved in the transport of selenium. The protein is Selenoprotein Pa (sepp1a) of Danio rerio (Zebrafish).